The primary structure comprises 713 residues: Cyclomaltodextrin glucanotransferase (713 aa).

The N-terminal stretch at 1 to 27 is a signal peptide; sequence MKRFMKLTAVWTLWLSLTLGLLSPVHA. Positions 28 to 165 are A1; it reads APDTSVSNKQ…NIKVIIDFAP (138 aa). The Ca(2+) site is built by aspartate 54, asparagine 56, asparagine 59, and asparagine 60. An intrachain disulfide couples cysteine 70 to cysteine 77. Ca(2+) is bound by residues glycine 78 and aspartate 80. 127–128 lines the substrate pocket; that stretch reads YW. Asparagine 166 provides a ligand contact to Ca(2+). The b stretch occupies residues 166-229; it reads NHTSPASSDD…NLYDLADLNH (64 aa). Substrate is bound at residue histidine 167. Isoleucine 217 lines the Ca(2+) pocket. 220–223 is a binding site for substrate; sequence NLYD. Ca(2+) is bound at residue aspartate 226. Positions 230–433 are A2; that stretch reads NNSSVDVYLK…LRKSNPAIAY (204 aa). Arginine 254 is a binding site for substrate. Catalysis depends on aspartate 256, which acts as the Nucleophile. A substrate-binding site is contributed by 259–260; it reads KH. Histidine 260 is a binding site for Ca(2+). The Proton donor role is filled by glutamate 284. 3 residues coordinate substrate: histidine 354, aspartate 398, and arginine 402. Residues 434-522 are c; the sequence is GSTHERWINN…GTAVWQYTTD (89 aa). The interval 523–609 is d; it reads ATTPIIGNVG…SNIYDNFEVL (87 aa). The 82-residue stretch at 526-607 folds into the IPT/TIG domain; it reads PIIGNVGPMM…AASNIYDNFE (82 aa). The CBM20 domain maps to 608–713; the sequence is VLTGDQVTVR…TATVNVNWQP (106 aa). The segment at 610–713 is e; sequence TGDQVTVRFV…TATVNVNWQP (104 aa).

It belongs to the glycosyl hydrolase 13 family. In terms of assembly, monomer. It depends on Ca(2+) as a cofactor.

It localises to the secreted. The enzyme catalyses Cyclizes part of a (1-&gt;4)-alpha-D-glucan chain by formation of a (1-&gt;4)-alpha-D-glucosidic bond.. The polypeptide is Cyclomaltodextrin glucanotransferase (cgt) (Bacillus sp. (strain 1011)).